The following is a 455-amino-acid chain: Dihydrolipoyllysine-residue succinyltransferase component of 2-oxoglutarate dehydrogenase complex, mitochondrial (455 aa).

A mitochondrion-targeting transit peptide spans methionine 1 to lysine 68. In terms of domain architecture, Lipoyl-binding spans valine 71–arginine 145. At serine 82 the chain carries Phosphoserine. An N6-lipoyllysine modification is found at lysine 111. The span at lysine 153 to alanine 173 shows a compositional bias: low complexity. The tract at residues lysine 153–glutamate 214 is disordered. An N6-acetyllysine modification is found at lysine 155. Positions valine 174–proline 195 are enriched in pro residues. A catalytic region spans residues leucine 221–leucine 453. 5 positions are modified to N6-acetyllysine: lysine 269, lysine 274, lysine 275, lysine 279, and lysine 309. Residues histidine 426 and aspartate 430 contribute to the active site.

It belongs to the 2-oxoacid dehydrogenase family. As to quaternary structure, the 2-oxoglutarate dehydrogenase complex is composed of OGDH (2-oxoglutarate dehydrogenase; E1), DLST (dihydrolipoamide succinyltransferase; E2), DLD (dihydrolipoamide dehydrogenase; E3) and the assembly factor KGD4. It contains multiple copies of the three enzymatic components (E1, E2 and E3). In the nucleus, the 2-oxoglutarate dehydrogenase complex associates with KAT2A. Interacts with ABHD11; this interaction maintains the functional lipoylation of the 2-oxoglutarate dehydrogenase complex. The cofactor is (R)-lipoate.

The protein resides in the mitochondrion matrix. The protein localises to the nucleus. It carries out the reaction N(6)-[(R)-dihydrolipoyl]-L-lysyl-[protein] + succinyl-CoA = N(6)-[(R)-S(8)-succinyldihydrolipoyl]-L-lysyl-[protein] + CoA. Its pathway is amino-acid degradation; L-lysine degradation via saccharopine pathway; glutaryl-CoA from L-lysine: step 6/6. It participates in carbohydrate metabolism; tricarboxylic acid cycle. Its function is as follows. Dihydrolipoamide succinyltransferase (E2) component of the 2-oxoglutarate dehydrogenase complex. The 2-oxoglutarate dehydrogenase complex catalyzes the overall conversion of 2-oxoglutarate to succinyl-CoA and CO(2). The 2-oxoglutarate dehydrogenase complex is mainly active in the mitochondrion. A fraction of the 2-oxoglutarate dehydrogenase complex also localizes in the nucleus and is required for lysine succinylation of histones: associates with KAT2A on chromatin and provides succinyl-CoA to histone succinyltransferase KAT2A. The sequence is that of Dihydrolipoyllysine-residue succinyltransferase component of 2-oxoglutarate dehydrogenase complex, mitochondrial from Sus scrofa (Pig).